Consider the following 238-residue polypeptide: MGKDRQPRGQQRQGDAAGPDDPGPKKGAGTREQRGEEEAQTCCGCRFPLLLALLQLALGVAVTVVGFLMASVSSSLLVRATPYWAGIIVCVVAYLGLFMLCVSYQVDERTCIQFSMKLLYFVLSALGLVVCVLAVAFAAHHYSLLTHLTCENAPDSCQCKLPSSEPLSRTFVYRDVTDCTSITGTFQVFLLVQMVLNLVCGLVCLVACFVMWKHRYQVFYVGVRMCPLSASEGQQQKV.

The segment at 1–33 (MGKDRQPRGQQRQGDAAGPDDPGPKKGAGTREQ) is disordered. The Extracellular segment spans residues 1–48 (MGKDRQPRGQQRQGDAAGPDDPGPKKGAGTREQRGEEEAQTCCGCRFP). The segment covering 8-20 (RGQQRQGDAAGPD) has biased composition (low complexity). The chain crosses the membrane as a helical span at residues 49 to 69 (LLLALLQLALGVAVTVVGFLM). Over 70–81 (ASVSSSLLVRAT) the chain is Cytoplasmic. A helical membrane pass occupies residues 82–102 (PYWAGIIVCVVAYLGLFMLCV). At 103-117 (SYQVDERTCIQFSMK) the chain is on the cytoplasmic side. A helical membrane pass occupies residues 118–138 (LLYFVLSALGLVVCVLAVAFA). The Extracellular portion of the chain corresponds to 139-188 (AHHYSLLTHLTCENAPDSCQCKLPSSEPLSRTFVYRDVTDCTSITGTFQV). Residues 189–209 (FLLVQMVLNLVCGLVCLVACF) traverse the membrane as a helical segment. Residues 210–238 (VMWKHRYQVFYVGVRMCPLSASEGQQQKV) are Cytoplasmic-facing.

The protein resides in the cell membrane. It localises to the sarcolemma. It is found in the postsynaptic cell membrane. In terms of biological role, component of the dystrophin-glycoprotein complex (DGC), a complex that spans the muscle plasma membrane and forms a link between the F-actin cytoskeleton and the extracellular matrix. Preferentially associates with the sarcoglycan subcomplex of the DGC. This chain is Sarcospan (SSPN), found in Oryctolagus cuniculus (Rabbit).